The following is a 430-amino-acid chain: Pyrokinin-1 receptor (430 aa).

Residues 1-16 (MSAGNMSHDLGPPRDP) are Extracellular-facing. An N-linked (GlcNAc...) asparagine glycan is attached at asparagine 5. A helical transmembrane segment spans residues 17–37 (LAIVIPVTVVYSLIFITGVVG). Residues 38–53 (NISTCIVIKKNRSMHT) are Cytoplasmic-facing. A helical transmembrane segment spans residues 54–74 (ATNYYLFSLAISDFLLLLSGV). The Extracellular segment spans residues 75-96 (PQEVSYIWSKYPYVFGEYICIG). The cysteines at positions 94 and 171 are disulfide-linked. Residues 97–117 (RGLLAETSANATVLTITAFTV) traverse the membrane as a helical segment. Over 118 to 140 (ERYIAICHPFLGQAMSKLSRAIR) the chain is Cytoplasmic. Residues 141-161 (IIVLVWIMAIVTAIPQAAQFG) form a helical membrane-spanning segment. Topologically, residues 162-185 (IEHYSGVEQCGIVRVIVKHSFQLS) are extracellular. Residues 186-206 (TFIFFLAPMSIILVLYLLIGV) traverse the membrane as a helical segment. At 207-281 (HLYRSTLVEG…GRLNHYGTRR (75 aa)) the chain is on the cytoplasmic side. Residues 282-302 (VLRMLVAVVVCFFLCWAPFHA) traverse the membrane as a helical segment. Topologically, residues 303–321 (QRLIAIYAPARGAKLRDQH) are extracellular. Residues 322–342 (EFVYTVMTYVSGVLYYLSTCI) form a helical membrane-spanning segment. Topologically, residues 343–430 (NPLLYNIMSH…QYAMIGVQVN (88 aa)) are cytoplasmic. The span at 388 to 397 (TNSSQTQRFS) shows a compositional bias: polar residues. The interval 388-413 (TNSSQTQRFSIESAEQPKPSIMQNPT) is disordered.

Belongs to the G-protein coupled receptor 1 family.

The protein localises to the cell membrane. In terms of biological role, receptor for the neuropeptide CAP-3/pyrokinin-1 (TGPSASSGLWFGPRL-amide). Also activated weakly by other neuropeptides terminating in the sequence PRL-amide including pyrokinin-2, Hug-gamma, and ecdysis-triggering-hormone-1. The activity of this receptor is mediated by G proteins which activate a phosphatidyl-inositol-calcium second messenger system. This Drosophila melanogaster (Fruit fly) protein is Pyrokinin-1 receptor.